A 594-amino-acid chain; its full sequence is Sodium-dependent glucose transporter 1 (594 aa).

11 helical membrane-spanning segments follow: residues 77–97 (WLVSLALCASFLGLGMAISVL), 115–137 (LSYIFVGRASGYIGGSLLGGILF), 144–161 (LLLGFALLTTAFGMSGTP), 166–186 (AWVLTVLMSSVGVSMGVLDTG), 205–225 (ALHFSFAAGAFASPIIAKLLF), 269–289 (IVIGAFVLLVSLLFFSLYFCI), 311–331 (TLIILLSMFFFFYVGSEVAYG), 349–371 (AAGLNSLFWGAFAAGRGLAIFFA), 393–413 (LLCLFSQNYPMLWACTALYGI), 439–459 (IFVVGAALGEMVLPALLGFLL), and 467–487 (LLMYLTLCTATFTSILFPVLY).

This sequence belongs to the major facilitator superfamily.

Its subcellular location is the apical cell membrane. In terms of biological role, may function as a sodium-dependent glucose transporter. Potential channels for urea in the inner medulla of kidney. In Danio rerio (Zebrafish), this protein is Sodium-dependent glucose transporter 1 (mfsd4b).